The chain runs to 51 residues: Nawaprin (51 aa).

The WAP domain maps to 1–50 (NEKSGSCPDMSMPIPPLGICKTLCNSDSGCPNVQKCCKNGCGFMTCTTPV). Cystine bridges form between Cys7/Cys37, Cys20/Cys41, Cys24/Cys36, and Cys30/Cys46.

In terms of tissue distribution, expressed by the venom gland.

Its subcellular location is the secreted. Its function is as follows. Damages membranes of susceptible bacteria. Has no hemolytic activity. Not toxic to mice. Does not inhibit the proteinases elastase and cathepsin G. The sequence is that of Nawaprin from Naja nigricollis (Black-necked spitting cobra).